The primary structure comprises 172 residues: Phosphopantetheine adenylyltransferase (172 aa).

Residue Thr-14 participates in substrate binding. Residues Thr-14–Phe-15 and His-22 contribute to the ATP site. Residues Lys-46, Leu-78, and Arg-92 each coordinate substrate. ATP contacts are provided by residues Gly-93–Arg-95, Glu-103, and Trp-128–Thr-134.

This sequence belongs to the bacterial CoaD family. As to quaternary structure, homohexamer. It depends on Mg(2+) as a cofactor.

The protein localises to the cytoplasm. The catalysed reaction is (R)-4'-phosphopantetheine + ATP + H(+) = 3'-dephospho-CoA + diphosphate. The protein operates within cofactor biosynthesis; coenzyme A biosynthesis; CoA from (R)-pantothenate: step 4/5. Reversibly transfers an adenylyl group from ATP to 4'-phosphopantetheine, yielding dephospho-CoA (dPCoA) and pyrophosphate. In Solidesulfovibrio magneticus (strain ATCC 700980 / DSM 13731 / RS-1) (Desulfovibrio magneticus), this protein is Phosphopantetheine adenylyltransferase.